Consider the following 355-residue polypeptide: UDP-N-acetylglucosamine--N-acetylmuramyl-(pentapeptide) pyrophosphoryl-undecaprenol N-acetylglucosamine transferase (355 aa).

UDP-N-acetyl-alpha-D-glucosamine contacts are provided by residues 15 to 17 (TGG), N127, R163, S191, I244, 263 to 268 (ALTVSE), and Q288.

It belongs to the glycosyltransferase 28 family. MurG subfamily.

It is found in the cell inner membrane. The catalysed reaction is di-trans,octa-cis-undecaprenyl diphospho-N-acetyl-alpha-D-muramoyl-L-alanyl-D-glutamyl-meso-2,6-diaminopimeloyl-D-alanyl-D-alanine + UDP-N-acetyl-alpha-D-glucosamine = di-trans,octa-cis-undecaprenyl diphospho-[N-acetyl-alpha-D-glucosaminyl-(1-&gt;4)]-N-acetyl-alpha-D-muramoyl-L-alanyl-D-glutamyl-meso-2,6-diaminopimeloyl-D-alanyl-D-alanine + UDP + H(+). It participates in cell wall biogenesis; peptidoglycan biosynthesis. In terms of biological role, cell wall formation. Catalyzes the transfer of a GlcNAc subunit on undecaprenyl-pyrophosphoryl-MurNAc-pentapeptide (lipid intermediate I) to form undecaprenyl-pyrophosphoryl-MurNAc-(pentapeptide)GlcNAc (lipid intermediate II). In Salmonella choleraesuis (strain SC-B67), this protein is UDP-N-acetylglucosamine--N-acetylmuramyl-(pentapeptide) pyrophosphoryl-undecaprenol N-acetylglucosamine transferase.